The primary structure comprises 401 residues: Adaptive-response sensory kinase SasA (401 aa).

A Histidine kinase domain is found at 175–400; it reads MLVHDLRNPL…WFHFTLPVYP (226 aa). Position 178 is a phosphohistidine; by autocatalysis (His178).

Homooligomerizes. Interacts with KaiC. Participates in the KaiABC clock complex, whose core is composed of a KaiC homohexamer, 6 KaiB and up to 6 KaiA dimers. SasA and KaiB(fs) compete to bind to KaiC.

The enzyme catalyses ATP + protein L-histidine = ADP + protein N-phospho-L-histidine.. Its function is as follows. Member of the two-component regulatory system SasA/RpaA involved in genome-wide circadian gene expression. One of several clock output pathways. Participates in the Kai clock protein complex, the main circadian regulator in cyanobacteria, via its interaction with KaiC. KaiC enhances the autophosphorylation activity of SasA, which then transfers its phosphate group to RpaA to activate it. In addition to its output function, recruits fold-shifted KaiB (KaiB(fs)) to KaiC to cooperatively form the KaiB(6):KaiC(6) complex (independent of SasA kinase activity). Required for robustness of the circadian rhythm of gene expression and is involved in clock output, also required for adaptation to light/dark cycles. This Nostoc sp. (strain PCC 7120 / SAG 25.82 / UTEX 2576) protein is Adaptive-response sensory kinase SasA.